The sequence spans 576 residues: Proline--tRNA ligase (576 aa).

The protein belongs to the class-II aminoacyl-tRNA synthetase family. ProS type 1 subfamily. Homodimer.

The protein resides in the cytoplasm. The enzyme catalyses tRNA(Pro) + L-proline + ATP = L-prolyl-tRNA(Pro) + AMP + diphosphate. Its function is as follows. Catalyzes the attachment of proline to tRNA(Pro) in a two-step reaction: proline is first activated by ATP to form Pro-AMP and then transferred to the acceptor end of tRNA(Pro). As ProRS can inadvertently accommodate and process non-cognate amino acids such as alanine and cysteine, to avoid such errors it has two additional distinct editing activities against alanine. One activity is designated as 'pretransfer' editing and involves the tRNA(Pro)-independent hydrolysis of activated Ala-AMP. The other activity is designated 'posttransfer' editing and involves deacylation of mischarged Ala-tRNA(Pro). The misacylated Cys-tRNA(Pro) is not edited by ProRS. In Trichlorobacter lovleyi (strain ATCC BAA-1151 / DSM 17278 / SZ) (Geobacter lovleyi), this protein is Proline--tRNA ligase.